Reading from the N-terminus, the 557-residue chain is Glutamyl-tRNA(Gln) amidotransferase subunit B, mitochondrial (557 aa).

A mitochondrion-targeting transit peptide spans 1–41; sequence MAAPMLRWGCRGRRWAFARVDGGSCHRRGAPTGSTSNQIRG. The disordered stretch occupies residues 26 to 45; it reads HRRGAPTGSTSNQIRGESSV. Over residues 32–45 the composition is skewed to polar residues; it reads TGSTSNQIRGESSV. Lys529 is modified (N6-succinyllysine).

It belongs to the GatB/GatE family. GatB subfamily. As to quaternary structure, subunit of the heterotrimeric GatCAB amidotransferase (AdT) complex, composed of A (QRSL1), B (GATB) and C (GATC) subunits. As to expression, predominantly expressed in tissues characterized by high rates of oxidative phosphorylation (OxPhos), including muscle and heart.

Its subcellular location is the mitochondrion. It carries out the reaction L-glutamyl-tRNA(Gln) + L-glutamine + ATP + H2O = L-glutaminyl-tRNA(Gln) + L-glutamate + ADP + phosphate + H(+). Its function is as follows. Allows the formation of correctly charged Gln-tRNA(Gln) through the transamidation of misacylated Glu-tRNA(Gln) in the mitochondria. The reaction takes place in the presence of glutamine and ATP through an activated gamma-phospho-Glu-tRNA(Gln). The sequence is that of Glutamyl-tRNA(Gln) amidotransferase subunit B, mitochondrial from Homo sapiens (Human).